The primary structure comprises 243 residues: Transmembrane protein 174 (243 aa).

A run of 2 helical transmembrane segments spans residues Leu40 to Ile60 and Leu73 to Phe93.

In terms of assembly, interacts with SLC34A1; regulates SLC34A1 internalization by PTH and FGF23. As to expression, predominantly expressed in kidney. Selectively localized in the apical membrane of renal proximal tubule epithelial cells.

Its subcellular location is the endoplasmic reticulum membrane. It is found in the apical cell membrane. Its function is as follows. Regulator of plasma phosphate homeostasis. Decreases serum inorganic phosphate (Pi) uptake by regulating the sodium-phosphate cotransporter SLC34A1 trafficking by PTH and FGF23 in the kidney. The chain is Transmembrane protein 174 (TMEM174) from Homo sapiens (Human).